Consider the following 355-residue polypeptide: MDQFPESVTENFEYDDLAEACYIGDIVVFGTVFLSIFYSVIFAIGLVGNLLVVFALTNSKKPKSVTDIYLLNLALSDLLFVATLPFWTHYLINEKGLHNAMCKFTTAFFFIGFFGSIFFITVISIDRYLAIVLAANSMNNRTVQHGVTISLGVWAAAILVAAPQFMFTKQKENECLGDYPEVLQEIWPVLRNVETNFLGFLLPLLIMSYCYFRIIQTLFSCKNHKKAKAIKLILLVVIVFFLFWTPYNVMIFLETLKLYDFFPSCDMRKDLRLALSVTETVAFSHCCLNPLIYAFAGEKFRRYLYHLYGKCLAVLCGRSVHVDFSSSESQRSRHGSVLSSNFTYHTSDGDALLLL.

Residues 1–31 are Extracellular-facing; the sequence is MDQFPESVTENFEYDDLAEACYIGDIVVFGT. Residues 32–59 form a helical membrane-spanning segment; that stretch reads VFLSIFYSVIFAIGLVGNLLVVFALTNS. The Cytoplasmic portion of the chain corresponds to 60 to 69; sequence KKPKSVTDIY. Residues 70–90 traverse the membrane as a helical segment; sequence LLNLALSDLLFVATLPFWTHY. At 91 to 103 the chain is on the extracellular side; sequence LINEKGLHNAMCK. A disulfide bridge connects residues C102 and C175. A helical membrane pass occupies residues 104–125; sequence FTTAFFFIGFFGSIFFITVISI. Over 126 to 142 the chain is Cytoplasmic; sequence DRYLAIVLAANSMNNRT. The chain crosses the membrane as a helical span at residues 143-167; the sequence is VQHGVTISLGVWAAAILVAAPQFMF. Topologically, residues 168–195 are extracellular; it reads TKQKENECLGDYPEVLQEIWPVLRNVET. The helical transmembrane segment at 196–215 threads the bilayer; it reads NFLGFLLPLLIMSYCYFRII. Residues 216–231 lie on the Cytoplasmic side of the membrane; that stretch reads QTLFSCKNHKKAKAIK. Residues 232–256 form a helical membrane-spanning segment; that stretch reads LILLVVIVFFLFWTPYNVMIFLETL. Residues 257 to 273 lie on the Extracellular side of the membrane; that stretch reads KLYDFFPSCDMRKDLRL. Residues 274–297 traverse the membrane as a helical segment; it reads ALSVTETVAFSHCCLNPLIYAFAG. Residues 298 to 355 lie on the Cytoplasmic side of the membrane; that stretch reads EKFRRYLYHLYGKCLAVLCGRSVHVDFSSSESQRSRHGSVLSSNFTYHTSDGDALLLL. The residue at position 346 (T346) is a Phosphothreonine.

This sequence belongs to the G-protein coupled receptor 1 family. Found in a ternary complex with CX3CL1 and ITGAV:ITGB3 or ITGA4:ITGB1. In terms of assembly, (Microbial infection) Interacts with human respiratory syncytial virus (HRSV) protein G; this interaction modulates host immune response. As to quaternary structure, (Microbial infection) Interacts with HIV-1 envelope polyprotein gp160. This protein is not N-glycosylated which is unusual for G-protein-coupled receptors. In terms of tissue distribution, expressed in lymphoid and neural tissues. Expressed in lymphocyte subsets, such as natural killer (NK) cells, gamma-delta T-cells and terminally differentiated CD8(+) T-cells. Expressed in smooth muscle cells in atherosclerotic plaques.

The protein resides in the cell membrane. In terms of biological role, receptor for the C-X3-C chemokine fractalkine (CX3CL1) present on many early leukocyte cells; CX3CR1-CX3CL1 signaling exerts distinct functions in different tissue compartments, such as immune response, inflammation, cell adhesion and chemotaxis. CX3CR1-CX3CL1 signaling mediates cell migratory functions. Responsible for the recruitment of natural killer (NK) cells to inflamed tissues. Acts as a regulator of inflammation process leading to atherogenesis by mediating macrophage and monocyte recruitment to inflamed atherosclerotic plaques, promoting cell survival. Involved in airway inflammation by promoting interleukin 2-producing T helper (Th2) cell survival in inflamed lung. Involved in the migration of circulating monocytes to non-inflamed tissues, where they differentiate into macrophages and dendritic cells. Acts as a negative regulator of angiogenesis, probably by promoting macrophage chemotaxis. Plays a key role in brain microglia by regulating inflammatory response in the central nervous system (CNS) and regulating synapse maturation. Required to restrain the microglial inflammatory response in the CNS and the resulting parenchymal damage in response to pathological stimuli. Involved in brain development by participating in synaptic pruning, a natural process during which brain microglia eliminates extra synapses during postnatal development. Synaptic pruning by microglia is required to promote the maturation of circuit connectivity during brain development. Acts as an important regulator of the gut microbiota by controlling immunity to intestinal bacteria and fungi. Expressed in lamina propria dendritic cells in the small intestine, which form transepithelial dendrites capable of taking up bacteria in order to provide defense against pathogenic bacteria. Required to initiate innate and adaptive immune responses against dissemination of commensal fungi (mycobiota) component of the gut: expressed in mononuclear phagocytes (MNPs) and acts by promoting induction of antifungal IgG antibodies response to confer protection against disseminated C.albicans or C.auris infection. Also acts as a receptor for C-C motif chemokine CCL26, inducing cell chemotaxis. Functionally, (Microbial infection) Acts as a coreceptor with CD4 for HIV-1 virus envelope protein. Its function is as follows. (Microbial infection) Acts as a coreceptor with CD4 for HIV-1 virus envelope protein. May have more potent HIV-1 coreceptothr activity than isoform 1. (Microbial infection) Acts as a coreceptor with CD4 for HIV-1 virus envelope protein. May have more potent HIV-1 coreceptor activity than isoform 1. In Homo sapiens (Human), this protein is CX3C chemokine receptor 1.